We begin with the raw amino-acid sequence, 459 residues long: Cyclooctat-9-en-7-ol 5-monooxygenase (459 aa).

The tract at residues 1-27 (MRERGPVTPAKSSAPPERPWTTGTAPG) is disordered. Position 408 (cysteine 408) interacts with heme.

This sequence belongs to the cytochrome P450 family. The cofactor is heme.

It carries out the reaction cyclooctat-9-en-7-ol + AH2 + O2 = cyclooctat-9-ene-5,7-diol + A + H2O. Functionally, involved in the biosynthesis of cyclooctatin, a potent inhibitor of lysophospholipase. Catalyzes the stereospecific hydroxylation of cyclooctat-9-en-7-ol to form cyclooctat-9-ene-5,7-diol. This is Cyclooctat-9-en-7-ol 5-monooxygenase from Streptomyces melanosporofaciens.